The following is a 221-amino-acid chain: Spore wall protein 3 (221 aa).

Residues 1–20 (MVRRSLYFLAVMGVVRSSSG) form the signal peptide. The tract at residues 150–203 (ENPASTGSSSTSTCPPKGTAGTTDNKGKAGGAAADDKSKSSSSSSSKKKKKGAK) is disordered. Positions 154-173 (STGSSSTSTCPPKGTAGTTD) are enriched in low complexity. S192 carries the GPI-anchor amidated serine lipid modification. A propeptide spans 193–221 (SSSKKKKKGAKSLVALGAVATTALFSIVM) (removed in mature form).

Its subcellular location is the spore wall. The protein resides in the membrane. It localises to the cytoplasm. Functionally, spore wall component. The chain is Spore wall protein 3 (SWP3) from Encephalitozoon cuniculi (strain GB-M1) (Microsporidian parasite).